A 319-amino-acid chain; its full sequence is Type II methyltransferase M.MpnI (319 aa).

Belongs to the N(4)/N(6)-methyltransferase family.

It carries out the reaction a 2'-deoxyadenosine in DNA + S-adenosyl-L-methionine = an N(6)-methyl-2'-deoxyadenosine in DNA + S-adenosyl-L-homocysteine + H(+). Functionally, a methylase that recognizes the double-stranded sequence 5'-CTAT-3' and methylates A-3 on one strand; probably responsible for all of the methylation on this site in the genome. The protein is Type II methyltransferase M.MpnI of Mycoplasma pneumoniae (strain ATCC 29342 / M129 / Subtype 1) (Mycoplasmoides pneumoniae).